The following is a 323-amino-acid chain: Homocysteine S-methyltransferase 1 (323 aa).

Residues 3-317 (VLEDLVARAG…STIRAVSKIL (315 aa)) enclose the Hcy-binding domain. Residues C235, C302, and C303 each contribute to the Zn(2+) site.

Monomer. The cofactor is Zn(2+).

It carries out the reaction S-methyl-L-methionine + L-homocysteine = 2 L-methionine + H(+). Catalyzes methyl transfer from S-methylmethionine (SMM) to adenosyl-L-homocysteine (AdoMet). SMM degradation (by HMT-1, HMT-2, HMT-3 and HMT-4) and biosynthesis (by MMT1) constitute the SMM cycle in plants, which is probably required to achieve short term control of AdoMet level. In Zea mays (Maize), this protein is Homocysteine S-methyltransferase 1 (HMT-1).